The primary structure comprises 161 residues: ATP synthase subunit b 1 (161 aa).

The helical transmembrane segment at 6 to 26 threads the bilayer; that stretch reads ETWVAIAFVILMVVFGYLGVF.

Belongs to the ATPase B chain family. In terms of assembly, F-type ATPases have 2 components, F(1) - the catalytic core - and F(0) - the membrane proton channel. F(1) has five subunits: alpha(3), beta(3), gamma(1), delta(1), epsilon(1). F(0) has three main subunits: a(1), b(2) and c(10-14). The alpha and beta chains form an alternating ring which encloses part of the gamma chain. F(1) is attached to F(0) by a central stalk formed by the gamma and epsilon chains, while a peripheral stalk is formed by the delta and b chains.

It is found in the cell inner membrane. F(1)F(0) ATP synthase produces ATP from ADP in the presence of a proton or sodium gradient. F-type ATPases consist of two structural domains, F(1) containing the extramembraneous catalytic core and F(0) containing the membrane proton channel, linked together by a central stalk and a peripheral stalk. During catalysis, ATP synthesis in the catalytic domain of F(1) is coupled via a rotary mechanism of the central stalk subunits to proton translocation. Functionally, component of the F(0) channel, it forms part of the peripheral stalk, linking F(1) to F(0). This chain is ATP synthase subunit b 1, found in Bradyrhizobium diazoefficiens (strain JCM 10833 / BCRC 13528 / IAM 13628 / NBRC 14792 / USDA 110).